The sequence spans 105 residues: Prothymosin alpha-A (105 aa).

The span at 1 to 30 shows a compositional bias: basic and acidic residues; that stretch reads MADTKVDTSKEVSAKDLKEKKQVEEAENGK. Residues 1 to 105 form a disordered region; that stretch reads MADTKVDTSK…VDPKKQKTDV (105 aa). Acidic residues-rich tracts occupy residues 39–78 and 87–96; these read ENEE…EEAE and EDDDDDEDDV.

This sequence belongs to the pro/parathymosin family. At the 20-somite stage (18 hpf), expressed on the dorsal side of the embryo in the developing central and peripheral nervous system (CNS and PNS), in the tail bud and the pronephric ducts. In the PNS, expressed in the otic vesicle, trigeminal ganglion and the anterior lateral line placode. Localized throughout the hindbrain, with highest expression in rhombomeres 3 and 4. In the head, expressed in the olfactory placode and in the diencephalic region. At the end of the segmentation period (20 hpf), expression begins in the newly forming endodermal pouches, and weakly in the pharyngeal arch precursor cells. During the early pharyngula period, expressed in the pectoral fin bud, the developing retina, and still present in the central nervous system and endodermal pouches. In the tail, expressed in the spinal cord and posterior lateral line precursors. Weakly expressed in the pronephric ducts, only in the corpuscles of Stanius. At 48 hpf, still expressed in the retina and brain, where expression is almost uniform. At this stage, expression is decreased in the spinal cord and is absent from the lateral line cells and pronephric ducts, but appears in the intestine and continues in the pharyngeal arches. In 72 hpf embryos, expression in the brain remains uniform but is restricted to amacrine cells in the retina. In the pharyngeal arches, expression continues to be limited to the ectodermal and endodermal covering cells.

It localises to the nucleus. The sequence is that of Prothymosin alpha-A (ptmaa) from Danio rerio (Zebrafish).